Here is a 557-residue protein sequence, read N- to C-terminus: Glucose-6-phosphate isomerase (557 aa).

Catalysis depends on glutamate 361, which acts as the Proton donor. Residues histidine 392 and lysine 520 contribute to the active site.

This sequence belongs to the GPI family.

Its subcellular location is the cytoplasm. It carries out the reaction alpha-D-glucose 6-phosphate = beta-D-fructose 6-phosphate. The protein operates within carbohydrate biosynthesis; gluconeogenesis. It participates in carbohydrate degradation; glycolysis; D-glyceraldehyde 3-phosphate and glycerone phosphate from D-glucose: step 2/4. Functionally, catalyzes the reversible isomerization of glucose-6-phosphate to fructose-6-phosphate. The polypeptide is Glucose-6-phosphate isomerase (Acinetobacter venetianus (strain ATCC 31012 / DSM 23050 / BCRC 14357 / CCUG 45561 / CIP 110063 / KCTC 2702 / LMG 19082 / RAG-1)).